We begin with the raw amino-acid sequence, 170 residues long: MTLKKDVAVDIDSTCFRQAVALFATGIAVLSAETEEGEVHGMTVNSFTSISLDPPTVMVSLKSGRMHELLTRGGRFGVSLLGESQKVFSAFFSKRVMDDTPSPAFTIQAGLPTLRDAMAWFECEVESTVQVHDHTLFIARVSACGTPEANAPQPLLFFASRYHGKPLPLN.

It belongs to the non-flavoprotein flavin reductase family. Homodimer.

It catalyses the reaction a reduced flavin + NAD(+) = an oxidized flavin + NADH + 2 H(+). It participates in aromatic compound metabolism. Reductase component of a two-component system that catalyzes the first step in the aerobic styrene degradation pathway by enantioselective epoxidation of the vinyl side chain. Utilizes NADH to reduce FAD, which is then transferred to the styrene monooxygenase StyA. This chain is NADH-dependent flavin reductase StyB (styB), found in Pseudomonas fluorescens.